Reading from the N-terminus, the 934-residue chain is MTRHLTLCFILLIILIDKSEACFCDHYPWTHWSSCSKSCNSGTQSRQRQIVVNDYYRDNSCDQLCTKQETRQCNVETCPINCVLGDYGTWSDCDPCIRKQVKVRSVLRPSQFGGQPCTEPLVTFQPCVPSELCKIEETDCKNKFLCDSGRCIPSKLKCNGENDCGDNSDERNCGRTKPVCSRTYTPIPSVQLMGAGFHFLAGEPRGDVPDNSFTGGICKSVRSSRTSNPHRVPANLENVNFEVQTIEDDLKTDFYKDLATIGKNKNEDRSLSGEKKDSFYVPIFYSSKKSENFQRNSGFKNAIEASHKKDSSFVRIHKVIKVLNFTMKTTDLQLSDVFLKALIHLPLEYNFALYSRIFDDFGTHYFTSGSLGGKYDLLYQFSRQELQNSGLTEEETRNCVRYETKKRFLFFTKTYKEDRCTTNRLSEKYKGSFLQGSEKSISLVQGGRSQQAAALAWEKGSSGPEANVFSEWLESVKENPAVVDYELAPIIDLVRNIPCAVTKRNNLRKALQEYAAKFDPCQCAPCPNNGRPRLSGTECLCVCQSGTYGENCEKRSPDYKSNAVDGNWGCWSSWSACNAAYRRSRSRECNNPEPQRGGQRCEGKHWQEEDCTFSIMEKVGQPCISDDEEIKEVDLAEPEADSGCPQPPLPENAFVWNEKKLYSVGEEVEISCLTGFKAVGYQYFRCLPDRTWRQGDVECQRTECLKPVVQDVLTISPFQSVYKIGESIELTCPRGFVVAGPSRYTCKGDSWTPPIPNSLSCEKDILTKSKGLCQPGQKQSGSECVCMSPEEDCSSYSEDLCIFDEGSSQYFTSSACKFLAEKCLNSNQFHFVHAGSCQEGPQLEWGLERLKLAMKSTKRVPCGYDTCYDWEKCSAHTSNCVCLLPPQCPKDENQLHCVKMGSSMRGKTVNICTLGAVRCANRKVEILNPGRCLD.

Positions methionine 1–alanine 21 are cleaved as a signal peptide. 11 disulfides stabilise this stretch: cysteine 22–cysteine 61, cysteine 24–cysteine 65, cysteine 35–cysteine 73, cysteine 39–cysteine 78, cysteine 82–cysteine 117, cysteine 93–cysteine 127, cysteine 96–cysteine 133, cysteine 140–cysteine 151, cysteine 146–cysteine 164, cysteine 158–cysteine 173, and cysteine 180–cysteine 218. 2 TSP type-1 domains span residues cysteine 22–proline 79 and asparagine 81–lysine 134. C-linked (Man) tryptophan glycans are attached at residues tryptophan 29 and tryptophan 32. Serine 38 carries an O-linked (Fuc...) serine glycan. Tryptophan 90 carries C-linked (Man) tryptophan glycosylation. One can recognise an LDL-receptor class A domain in the interval threonine 138–arginine 175. Positions 156, 159, 161, 163, 169, and 170 each coordinate Ca(2+). The region spanning threonine 176 to glutamine 522 is the MACPF domain. The chain crosses the membrane as a beta stranded span at residues serine 278 to serine 290. Asparagine 324 is a glycosylation site (N-linked (GlcNAc...) asparagine). Threonine 392 is a glycosylation site (O-linked (Fuc...) threonine). Intrachain disulfides connect cysteine 399–cysteine 420, cysteine 499–cysteine 623, cysteine 521–cysteine 570, cysteine 523–cysteine 539, cysteine 526–cysteine 541, cysteine 543–cysteine 552, cysteine 577–cysteine 611, cysteine 589–cysteine 601, cysteine 644–cysteine 686, cysteine 672–cysteine 699, cysteine 704–cysteine 746, cysteine 732–cysteine 761, cysteine 773–cysteine 823, cysteine 784–cysteine 801, cysteine 786–cysteine 837, cysteine 793–cysteine 816, cysteine 862–cysteine 873, cysteine 867–cysteine 919, cysteine 880–cysteine 897, cysteine 882–cysteine 932, and cysteine 888–cysteine 912. A beta stranded membrane pass occupies residues tyrosine 402–tyrosine 415. The EGF-like domain occupies cysteine 523 to glutamate 553. The 48-residue stretch at aspartate 565–threonine 612 folds into the TSP type-1 3 domain. Residues tryptophan 568, tryptophan 571, and tryptophan 574 are each glycosylated (C-linked (Man) tryptophan). 2 CCP regions span residues cysteine 611 to proline 688 and aspartate 689 to isoleucine 765. Sushi domains follow at residues serine 642–arginine 701 and threonine 702–lysine 763. The tract at residues serine 642 to aspartate 934 is C5B-binding domain. Factor I module (FIM) regions lie at residues leucine 766 to glycine 840 and lysine 858 to aspartate 934. In terms of domain architecture, Kazal-like 1 spans serine 780–glutamate 839. One can recognise a Kazal-like 2 domain in the interval histidine 876–aspartate 934.

This sequence belongs to the complement C6/C7/C8/C9 family. As to quaternary structure, component of the membrane attack complex (MAC), composed of complement C5b, C6, C7, C8A, C8B, C8G and multiple copies of the pore-forming subunit C9. Post-translationally, all cysteine residues are assumed to be cross-linked to one another. Individual modules containing an even number of conserved cysteine residues are supposed to have disulfide linkages only within the same module.

It is found in the secreted. The protein localises to the target cell membrane. Membrane attack complex (MAC) assembly is inhibited by CD59, thereby protecting self-cells from damage during complement activation. MAC assembly is also inhibited by clusterin (CLU) chaperones that inhibit polymerization of C9. Functionally, component of the membrane attack complex (MAC), a multiprotein complex activated by the complement cascade, which inserts into a target cell membrane and forms a pore, leading to target cell membrane rupture and cell lysis. The MAC is initiated by proteolytic cleavage of C5 into complement C5b in response to the classical, alternative, lectin and GZMK complement pathways. The complement pathways consist in a cascade of proteins that leads to phagocytosis and breakdown of pathogens and signaling that strengthens the adaptive immune system. Together with component C5b, involved in MAC complex assembly: complement C5b and C6 associate with the outer leaflet of target cell membrane, reducing the energy for membrane bending. The polypeptide is Complement component C6 (C6) (Rattus norvegicus (Rat)).